Consider the following 148-residue polypeptide: uncharacterized protein (148 aa).

The HTH asnC-type domain occupies 2–63 (LDELDKRILY…LINPFKAGYE (62 aa)). The segment at residues 21-40 (YSEIARILGVPESTVRVRVK) is a DNA-binding region (H-T-H motif).

This is an uncharacterized protein from Pyrococcus furiosus (strain ATCC 43587 / DSM 3638 / JCM 8422 / Vc1).